The chain runs to 147 residues: Endoribonuclease YbeY (147 aa).

Zn(2+) is bound by residues His108, His112, and His118.

The protein belongs to the endoribonuclease YbeY family. Requires Zn(2+) as cofactor.

The protein resides in the cytoplasm. Its function is as follows. Single strand-specific metallo-endoribonuclease involved in late-stage 70S ribosome quality control and in maturation of the 3' terminus of the 16S rRNA. This is Endoribonuclease YbeY from Sulfurovum sp. (strain NBC37-1).